The sequence spans 183 residues: MAVPQVNGDVSPRPNSAFLQHLLAYPLISDSIHTVRANEYAQRSIKLGDSAYQTFAAPVLPWLAKPYEYVSPYVARADSLGDKTLDRIDERFPIVKKPTSDLYNDTRSLILFPYNKSIEGRDHIFDVYASEAKKIEQKGLVGQGKAAVSTAFVVSNETLGWLSSFLAAKKAEATTVVKEKVKQ.

It belongs to the perilipin family.

Its subcellular location is the lipid droplet. Lipid droplet coating protein that regulates lipid metabolism, appressorial turgor pressure, and virulence. Appressorial turgor pressure is important for breaching the insect cuticle during infection. The sequence is that of Lipid droplet coating protein mpl1 from Metarhizium robertsii (strain ARSEF 23 / ATCC MYA-3075) (Metarhizium anisopliae (strain ARSEF 23)).